Here is a 135-residue protein sequence, read N- to C-terminus: Large ribosomal subunit protein bL17 (135 aa).

This sequence belongs to the bacterial ribosomal protein bL17 family. As to quaternary structure, part of the 50S ribosomal subunit. Contacts protein L32.

This chain is Large ribosomal subunit protein bL17, found in Listeria welshimeri serovar 6b (strain ATCC 35897 / DSM 20650 / CCUG 15529 / CIP 8149 / NCTC 11857 / SLCC 5334 / V8).